A 236-amino-acid polypeptide reads, in one-letter code: Proteasome subunit alpha (236 aa).

The protein belongs to the peptidase T1A family. In terms of assembly, the 20S proteasome core is composed of 14 alpha and 14 beta subunits that assemble into four stacked heptameric rings, resulting in a barrel-shaped structure. The two inner rings, each composed of seven catalytic beta subunits, are sandwiched by two outer rings, each composed of seven alpha subunits. The catalytic chamber with the active sites is on the inside of the barrel. Has a gated structure, the ends of the cylinder being occluded by the N-termini of the alpha-subunits. Is capped by the proteasome-associated ATPase, ARC.

The protein localises to the cytoplasm. It participates in protein degradation; proteasomal Pup-dependent pathway. The formation of the proteasomal ATPase ARC-20S proteasome complex, likely via the docking of the C-termini of ARC into the intersubunit pockets in the alpha-rings, may trigger opening of the gate for substrate entry. Interconversion between the open-gate and close-gate conformations leads to a dynamic regulation of the 20S proteasome proteolysis activity. Functionally, component of the proteasome core, a large protease complex with broad specificity involved in protein degradation. This is Proteasome subunit alpha from Pseudarthrobacter chlorophenolicus (strain ATCC 700700 / DSM 12829 / CIP 107037 / JCM 12360 / KCTC 9906 / NCIMB 13794 / A6) (Arthrobacter chlorophenolicus).